Reading from the N-terminus, the 56-residue chain is Protein hunchback (56 aa).

3 consecutive C2H2-type zinc fingers follow at residues 1–5 (HLRNH), 11–33 (FRCD…LKSH), and 39–56 (YRCA…SLKL).

The protein belongs to the hunchback C2H2-type zinc-finger protein family.

It localises to the nucleus. Its function is as follows. Gap class segmentation protein that controls development of head structures. The protein is Protein hunchback (hb) of Locusta migratoria (Migratory locust).